We begin with the raw amino-acid sequence, 1047 residues long: Jouberin (1047 aa).

3 stretches are compositionally biased toward basic and acidic residues: residues M1–R17, S29–E40, and L77–E86. Disordered stretches follow at residues M1–E40 and E67–S181. The tract at residues M1–L284 is interaction with HAP1. Low complexity predominate over residues P96–S106. The segment covering G115 to D138 has biased composition (basic and acidic residues). Basic residues predominate over residues P149–K159. Over residues G172–S181 the composition is skewed to basic and acidic residues. WD repeat units lie at residues A457–E499, G502–F541, P545–I585, V592–Q631, F648–F687, A691–M730, and P735–E776. S853 is modified (phosphoserine). Residues D902–L962 form the SH3 domain. Basic and acidic residues-rich tracts occupy residues Y963–K987 and H1013–V1040. The interval Y963–E1047 is disordered. S974 is modified (phosphoserine).

As to quaternary structure, self-associates. Part of the tectonic-like complex (also named B9 complex). Interacts with MKS1. Interacts with NPHP1; probably as heterodimers and/or AHI1(2):NPHP1(2) heterotetramers. Interacts (via SH3 domain) with the dynamin GTPase DNM2. Interacts with HAP1; probably as AHI1(2):HAP1(2) heterotetramers. Interacts with RAB8A. Interacts with CEND1. Interacts with SPATA7. In terms of tissue distribution, expressed in the retina (at protein level). Highly expressed in the brain. Highly expressed in the testis. Expressed in the kidney, thymus, heart, lung, spleen. Weakly expressed in the liver, stomach, pancreas, and embryo. Strongly expressed during periods of both cortical and cerebellar development.

The protein localises to the cytoplasm. Its subcellular location is the cytoskeleton. It is found in the cilium basal body. It localises to the microtubule organizing center. The protein resides in the centrosome. The protein localises to the centriole. Its subcellular location is the cell junction. It is found in the adherens junction. Involved in vesicle trafficking and required for ciliogenesis, formation of primary non-motile cilium, and recruitment of RAB8A to the basal body of primary cilium. Component of the tectonic-like complex, a complex localized at the transition zone of primary cilia and acting as a barrier that prevents diffusion of transmembrane proteins between the cilia and plasma membranes. Involved in neuronal differentiation. As a positive modulator of classical Wnt signaling, may play a crucial role in ciliary signaling during cerebellum embryonic development. The protein is Jouberin (Ahi1) of Mus musculus (Mouse).